A 264-amino-acid polypeptide reads, in one-letter code: Glutamate racemase (264 aa).

Substrate-binding positions include 10–11 (DS) and 42–43 (YG). The active-site Proton donor/acceptor is Cys-73. 74–75 (NT) contacts substrate. Cys-183 functions as the Proton donor/acceptor in the catalytic mechanism. 184 to 185 (TH) is a substrate binding site.

This sequence belongs to the aspartate/glutamate racemases family.

It catalyses the reaction L-glutamate = D-glutamate. The protein operates within cell wall biogenesis; peptidoglycan biosynthesis. Functionally, provides the (R)-glutamate required for cell wall biosynthesis. This is Glutamate racemase from Streptococcus pyogenes serotype M3 (strain ATCC BAA-595 / MGAS315).